A 205-amino-acid chain; its full sequence is Holliday junction branch migration complex subunit RuvA (205 aa).

The tract at residues 1 to 64 (MIGRLRGIIL…EDAQLLFGFN (64 aa)) is domain I. Positions 65–143 (DKQERALFRE…GLSGDLFNSV (79 aa)) are domain II. A flexible linker region spans residues 144 to 156 (SDIPLTSPANVDN). The domain III stretch occupies residues 157-205 (RVGEPEAEAAAALVALGYKPQEASRMISKIARPDADCETLIRDALRAAL).

The protein belongs to the RuvA family. As to quaternary structure, homotetramer. Forms an RuvA(8)-RuvB(12)-Holliday junction (HJ) complex. HJ DNA is sandwiched between 2 RuvA tetramers; dsDNA enters through RuvA and exits via RuvB. An RuvB hexamer assembles on each DNA strand where it exits the tetramer. Each RuvB hexamer is contacted by two RuvA subunits (via domain III) on 2 adjacent RuvB subunits; this complex drives branch migration. In the full resolvosome a probable DNA-RuvA(4)-RuvB(12)-RuvC(2) complex forms which resolves the HJ.

The protein resides in the cytoplasm. The RuvA-RuvB-RuvC complex processes Holliday junction (HJ) DNA during genetic recombination and DNA repair, while the RuvA-RuvB complex plays an important role in the rescue of blocked DNA replication forks via replication fork reversal (RFR). RuvA specifically binds to HJ cruciform DNA, conferring on it an open structure. The RuvB hexamer acts as an ATP-dependent pump, pulling dsDNA into and through the RuvAB complex. HJ branch migration allows RuvC to scan DNA until it finds its consensus sequence, where it cleaves and resolves the cruciform DNA. The protein is Holliday junction branch migration complex subunit RuvA of Pectobacterium atrosepticum (strain SCRI 1043 / ATCC BAA-672) (Erwinia carotovora subsp. atroseptica).